The following is an 860-amino-acid chain: Alanine--tRNA ligase (860 aa).

Residues His-553, His-557, Cys-655, and His-659 each contribute to the Zn(2+) site.

This sequence belongs to the class-II aminoacyl-tRNA synthetase family. Zn(2+) is required as a cofactor.

The protein localises to the cytoplasm. The catalysed reaction is tRNA(Ala) + L-alanine + ATP = L-alanyl-tRNA(Ala) + AMP + diphosphate. Its function is as follows. Catalyzes the attachment of alanine to tRNA(Ala) in a two-step reaction: alanine is first activated by ATP to form Ala-AMP and then transferred to the acceptor end of tRNA(Ala). Also edits incorrectly charged Ser-tRNA(Ala) and Gly-tRNA(Ala) via its editing domain. In Legionella pneumophila (strain Paris), this protein is Alanine--tRNA ligase.